A 139-amino-acid chain; its full sequence is ATP synthase epsilon chain (139 aa).

Belongs to the ATPase epsilon chain family. As to quaternary structure, F-type ATPases have 2 components, CF(1) - the catalytic core - and CF(0) - the membrane proton channel. CF(1) has five subunits: alpha(3), beta(3), gamma(1), delta(1), epsilon(1). CF(0) has three main subunits: a, b and c.

The protein localises to the cell inner membrane. In terms of biological role, produces ATP from ADP in the presence of a proton gradient across the membrane. The chain is ATP synthase epsilon chain from Pectobacterium carotovorum subsp. carotovorum (strain PC1).